A 270-amino-acid polypeptide reads, in one-letter code: High choriolytic enzyme 1 (270 aa).

Residues Met1–Ala20 form the signal peptide. Residues Leu21 to Arg70 constitute a propeptide, activation peptide. N-linked (GlcNAc...) asparagine glycosylation occurs at Asn53. A Peptidase M12A domain is found at Asn71 to Arg270. 3 disulfide bridges follow: Cys75–Cys80, Cys120–Cys269, and Cys141–Cys161. His169 provides a ligand contact to Zn(2+). Glu170 is a catalytic residue. Positions 173 and 179 each coordinate Zn(2+).

Zn(2+) serves as cofactor.

Its subcellular location is the zymogen granule. It carries out the reaction Hydrolysis of the inner layer of fish egg envelope. Also hydrolysis of casein and small molecule substrates such as succinyl-Leu-Leu-Val-Tyr-|-7-(4-methyl)coumarylamide.. In terms of biological role, participates in the breakdown of the egg envelope, which is derived from the egg extracellular matrix, at the time of hatching. Thus allowing the newly hatched fish to swim free. HCE binds tightly to the egg envelope while it exerts the choriolytic swelling action. In Oryzias latipes (Japanese rice fish), this protein is High choriolytic enzyme 1 (hcea).